A 469-amino-acid polypeptide reads, in one-letter code: Cysteine protease ATG4D (469 aa).

A compositionally biased stretch (polar residues) spans 1-29 (MNSVSPLATQYGSPKGSQQMENRSTQSGG). Positions 1-41 (MNSVSPLATQYGSPKGSQQMENRSTQSGGHEQRKMGHQDAT) are disordered. Cys131 (nucleophile) is an active-site residue. The segment at 169-191 (IRSSSPPSMPLSSLATGHSAGDY) is disordered. Low complexity predominate over residues 171 to 182 (SSSPPSMPLSSL). Catalysis depends on residues Asp356 and His358. The segment at 436–469 (QEYAEGPQSSSHPPVCRKKGPLVKRPSSDEFEFL) is disordered.

The protein belongs to the peptidase C54 family.

The protein resides in the cytoplasm. The enzyme catalyses [protein]-C-terminal L-amino acid-glycyl-phosphatidylethanolamide + H2O = [protein]-C-terminal L-amino acid-glycine + a 1,2-diacyl-sn-glycero-3-phosphoethanolamine. It carries out the reaction [protein]-C-terminal L-amino acid-glycyl-phosphatidylserine + H2O = [protein]-C-terminal L-amino acid-glycine + a 1,2-diacyl-sn-glycero-3-phospho-L-serine. In terms of biological role, cysteine protease that plays a key role in autophagy by mediating both proteolytic activation and delipidation of ATG8 family proteins. The protease activity is required for proteolytic activation of ATG8 family proteins to reveal a C-terminal glycine. Exposure of the glycine at the C-terminus is essential for ATG8 proteins conjugation to phosphatidylethanolamine (PE) and insertion to membranes, which is necessary for autophagy. In addition to the protease activity, also mediates delipidation of ATG8 family proteins. Catalyzes delipidation of PE-conjugated forms of ATG8 proteins during macroautophagy. Also involved in non-canonical autophagy, a parallel pathway involving conjugation of ATG8 proteins to single membranes at endolysosomal compartments, by catalyzing delipidation of ATG8 proteins conjugated to phosphatidylserine (PS). The sequence is that of Cysteine protease ATG4D from Xenopus laevis (African clawed frog).